The sequence spans 691 residues: Elongation factor G (691 aa).

Positions 10–284 (KRLRNIGIAA…AVVDYLPSPL (275 aa)) constitute a tr-type G domain. Residues 19–26 (AHIDAGKT), 83–87 (DTPGH), and 137–140 (NKMD) each bind GTP.

The protein belongs to the TRAFAC class translation factor GTPase superfamily. Classic translation factor GTPase family. EF-G/EF-2 subfamily.

Its subcellular location is the cytoplasm. Functionally, catalyzes the GTP-dependent ribosomal translocation step during translation elongation. During this step, the ribosome changes from the pre-translocational (PRE) to the post-translocational (POST) state as the newly formed A-site-bound peptidyl-tRNA and P-site-bound deacylated tRNA move to the P and E sites, respectively. Catalyzes the coordinated movement of the two tRNA molecules, the mRNA and conformational changes in the ribosome. This Thermus thermophilus (strain ATCC 27634 / DSM 579 / HB8) protein is Elongation factor G (fusA).